We begin with the raw amino-acid sequence, 1175 residues long: Phospholipid-transporting ATPase IF (1175 aa).

The next 4 helical transmembrane spans lie at 69-89 (FYFLIIFLVQLMIDTPTSPIT), 91-111 (GLPLFFVITVTAIKQGYEDWL), 287-307 (NTFLIIYLIILISEAIISTIL), and 338-358 (FISDFLAFLVLYNFIIPISLY). Aspartate 407 serves as the catalytic 4-aspartylphosphate intermediate. Aspartate 407, lysine 408, threonine 409, glutamate 530, phenylalanine 571, lysine 594, arginine 625, threonine 705, glycine 706, aspartate 707, arginine 793, and lysine 799 together coordinate ATP. Aspartate 407 serves as a coordination point for Mg(2+). Position 409 (threonine 409) interacts with Mg(2+). Residue aspartate 820 participates in Mg(2+) binding. ATP-binding residues include asparagine 823 and aspartate 824. Aspartate 824 is a Mg(2+) binding site. 6 helical membrane-spanning segments follow: residues 862 to 882 (LLFVHGHFYYIRIATLVQYFF), 910 to 930 (VYLTLYNICFTSLPVLIYSLV), 963 to 983 (WTVLGFSHAFIFFFGSYFLVG), 994 to 1014 (MFGNWTFGTLVFTVMVITVTV), 1033 to 1053 (GSIIFYFIFSLFYGGILWPFL), and 1060 to 1080 (FVFIQLLSSGSAWFAILLMVV).

The protein belongs to the cation transport ATPase (P-type) (TC 3.A.3) family. Type IV subfamily. Component of a P4-ATPase flippase complex which consists of a catalytic alpha subunit ATP11B and an accessory beta subunit TMEM30A. The cofactor is Mg(2+). Expressed in retina, brain, liver, testes and kidney (at protein level).

Its subcellular location is the recycling endosome membrane. It is found in the early endosome. The protein localises to the endoplasmic reticulum. It localises to the golgi apparatus. The protein resides in the trans-Golgi network. It catalyses the reaction ATP + H2O + phospholipidSide 1 = ADP + phosphate + phospholipidSide 2.. The catalysed reaction is a 1,2-diacyl-sn-glycero-3-phospho-L-serine(out) + ATP + H2O = a 1,2-diacyl-sn-glycero-3-phospho-L-serine(in) + ADP + phosphate + H(+). The enzyme catalyses a 1,2-diacyl-sn-glycero-3-phosphoethanolamine(out) + ATP + H2O = a 1,2-diacyl-sn-glycero-3-phosphoethanolamine(in) + ADP + phosphate + H(+). In terms of biological role, catalytic component of a P4-ATPase flippase complex which catalyzes the hydrolysis of ATP coupled to the transport of aminophospholipids, phosphatidylserines (PS) and phosphatidylethanolamines (PE), from the outer to the inner leaflet of intracellular membranes. May contribute to the maintenance of membrane lipid asymmetry in endosome compartment. The chain is Phospholipid-transporting ATPase IF from Mus musculus (Mouse).